Reading from the N-terminus, the 176-residue chain is Siroheme decarboxylase alpha subunit (176 aa).

The interval 1 to 24 (MTEAHNACCHPSGTAAGHHGAGKA) is disordered. Residues 12 to 24 (SGTAAGHHGAGKA) are compositionally biased toward low complexity.

The protein belongs to the Ahb/Nir family. In terms of assembly, forms a heterodimer composed of AhbA and AhbB. Also forms heterotetramers.

It catalyses the reaction siroheme + 2 H(+) = 12,18-didecarboxysiroheme + 2 CO2. It participates in porphyrin-containing compound metabolism; protoheme biosynthesis. In terms of biological role, involved in siroheme-dependent heme b biosynthesis. Catalyzes the decarboxylation of siroheme into didecarboxysiroheme. The polypeptide is Siroheme decarboxylase alpha subunit (Nitratidesulfovibrio vulgaris (strain ATCC 29579 / DSM 644 / CCUG 34227 / NCIMB 8303 / VKM B-1760 / Hildenborough) (Desulfovibrio vulgaris)).